The following is a 144-amino-acid chain: Universal stress protein F (144 aa).

It belongs to the universal stress protein A family. As to quaternary structure, homodimer.

The polypeptide is Universal stress protein F (uspF) (Salmonella typhi).